We begin with the raw amino-acid sequence, 147 residues long: Large ribosomal subunit protein uL13 (147 aa).

It belongs to the universal ribosomal protein uL13 family. Part of the 50S ribosomal subunit.

In terms of biological role, this protein is one of the early assembly proteins of the 50S ribosomal subunit, although it is not seen to bind rRNA by itself. It is important during the early stages of 50S assembly. This Leuconostoc citreum (strain KM20) protein is Large ribosomal subunit protein uL13.